The chain runs to 255 residues: Tachylectin-2 (255 aa).

An N-terminal signal peptide occupies residues 1-19; it reads MKFLLVVLGFIGFLKDGIT. 5 WD repeats span residues 20 to 67, 68 to 114, 115 to 161, 162 to 208, and 209 to 255; these read VGGE…FLFL, SPGG…FLFF, DPNG…FLFF, HPNG…FLFF, and SSVG…FLFF.

Monomer.

The protein resides in the secreted. The protein localises to the cytoplasmic granule. Functionally, lectin that binds specifically to N-acetylglucosamine and N-acetylgalactosamine. Is part of the innate immunity host defense system of the horseshoe crab. The chain is Tachylectin-2 from Tachypleus tridentatus (Japanese horseshoe crab).